Reading from the N-terminus, the 182-residue chain is D-lyxose ketol-isomerase (182 aa).

Mn(2+)-binding residues include H74, H76, E87, and H142.

This sequence belongs to the D-lyxose ketol-isomerase family. Homodimer. Mn(2+) serves as cofactor.

It carries out the reaction D-lyxose = D-xylulose. Its function is as follows. Sugar isomerase that catalyzes the reversible isomerization of D-lyxose to D-xylulose. Shows weak activity with D-mannose and L-ribose. This chain is D-lyxose ketol-isomerase, found in Cohnella laeviribosi.